Reading from the N-terminus, the 426-residue chain is Pannexin-1 (426 aa).

Residues 1–40 are Cytoplasmic-facing; the sequence is MAIAQLATEYVFSDFLLKEPTEPKFKGLRLELAVDKMVTC. Cysteine 40 is modified (S-nitrosocysteine). Residues 41–61 traverse the membrane as a helical segment; sequence IAVGLPLLLISLAFAQEISIG. Residues 62–106 lie on the Extracellular side of the membrane; sequence TQISCFSPSSFSWRQAAFVDSYCWAAVQQKNSLQSESGNLPLWLH. Intrachain disulfides connect cysteine 66/cysteine 265 and cysteine 84/cysteine 246. The helical transmembrane segment at 107–127 threads the bilayer; sequence KFFPYILLLFAILLYLPPLFW. At 128–217 the chain is on the cytoplasmic side; that stretch reads RFAAAPHICS…NLIIKYISCR (90 aa). Position 199 is a phosphotyrosine (tyrosine 199). Residues 218-238 form a helical membrane-spanning segment; sequence LLTLIIILLACIYLGYYFSLS. Residues 239–266 lie on the Extracellular side of the membrane; it reads SLSDEFVCSIKSGILRNDSTVPDQFQCK. The N-linked (GlcNAc...) asparagine glycan is linked to asparagine 255. Residues 267-287 traverse the membrane as a helical segment; the sequence is LIAVGIFQLLSVINLVVYVLL. The Cytoplasmic segment spans residues 288–426; the sequence is APVVVYTLFV…ARQRLLDSSC (139 aa). Cysteine 347 carries the S-nitrosocysteine modification. A compositionally biased stretch (polar residues) spans 405–414; sequence DSETKANNGE. The tract at residues 405 to 426 is disordered; the sequence is DSETKANNGEKNARQRLLDSSC. A compositionally biased stretch (basic and acidic residues) spans 415-426; sequence KNARQRLLDSSC.

It belongs to the pannexin family. As to quaternary structure, homoheptameric. In terms of processing, S-nitrosylation inhibits channel currents and ATP release. Post-translationally, N-glycosylation plays a role in cell surface targeting. Glycosylation at its extracellular surface makes unlikely that two oligomers could dock to form an intercellular channel such as in gap junctions. Exists in three glycosylation states: non-glycosylated (GLY0), high-mannose glycosylated (GLY1), and fully mature glycosylated (GLY2). Cleaved by CASP3 and CASP7 during apoptosis. Cleavage opens the channel for the release of metabolites and induces plasma membrane permeability during apoptosis. In terms of processing, phosphorylated at Tyr-199 by SRC. Phosphorylation activates ATP release. Constitutively phosphorylated in vascular smooth muscle cells. Widely expressed. Highest expression is observed in oocytes and brain. Detected at very low levels in sperm cells.

It is found in the cell membrane. The protein resides in the endoplasmic reticulum membrane. It catalyses the reaction chloride(in) = chloride(out). It carries out the reaction iodide(out) = iodide(in). The catalysed reaction is ATP(in) = ATP(out). The enzyme catalyses K(+)(in) = K(+)(out). It catalyses the reaction Ca(2+)(in) = Ca(2+)(out). It carries out the reaction Na(+)(in) = Na(+)(out). The catalysed reaction is nitrate(in) = nitrate(out). The enzyme catalyses L-aspartate(out) = L-aspartate(in). It catalyses the reaction L-glutamate(out) = L-glutamate(in). It carries out the reaction D-gluconate(in) = D-gluconate(out). The catalysed reaction is spermidine(in) = spermidine(out). Functionally, ion channel involved in a variety of physiological functions such as blood pressure regulation, apoptotic cell clearance and oogenesis. Forms anion-selective channels with relatively low conductance and an order of permeabilities: nitrate&gt;iodide&gt;chlroride&gt;&gt;aspartate=glutamate=gluconate. Can release ATP upon activation through phosphorylation or cleavage at C-terminus. May play a role as a Ca(2+)-leak channel to regulate ER Ca(2+) homeostasis. In terms of biological role, during apoptosis, the C terminal tail is cleaved by caspases, which opens the main pore acting as a large-pore ATP efflux channel with a broad distribution, which allows the regulated release of molecules and ions smaller than 1 kDa, such as nucleotides ATP and UTP, and selective plasma membrane permeability to attract phagocytes that engulf the dying cells. This Homo sapiens (Human) protein is Pannexin-1.